The primary structure comprises 188 residues: F-box only protein 36 (188 aa).

Residues Phe-91 to Ile-137 form the F-box domain.

As to quaternary structure, directly interacts with SKP1 and CUL1.

In terms of biological role, substrate-recognition component of the SCF (SKP1-CUL1-F-box protein)-type E3 ubiquitin ligase complex. The polypeptide is F-box only protein 36 (FBXO36) (Pongo abelii (Sumatran orangutan)).